The following is a 432-amino-acid chain: CBL-interacting serine/threonine-protein kinase 17 (432 aa).

The region spanning 11–266 (YELGRTLGEG…IAGIKAHDWF (256 aa)) is the Protein kinase domain. Residues 17–25 (LGEGNSAKV) and Lys-40 contribute to the ATP site. Asp-134 serves as the catalytic Proton acceptor. An activation loop region spans residues 152-181 (DFGLSALSQHYREDGLLHTTCGSPNYVAPE). The residue at position 156 (Ser-156) is a Phosphoserine. Thr-170 carries the post-translational modification Phosphothreonine. One can recognise an NAF domain in the interval 301–325 (DSPTIINAFQLIGMSSFLDLSGFFE). Residues 331 to 360 (ERQIRFTSNSLAKDLLENIETIFTEMGFCL) are PPI.

The protein belongs to the protein kinase superfamily. CAMK Ser/Thr protein kinase family. SNF1 subfamily. Interacts with CBL1. Requires Mn(2+) as cofactor.

It catalyses the reaction L-seryl-[protein] + ATP = O-phospho-L-seryl-[protein] + ADP + H(+). The enzyme catalyses L-threonyl-[protein] + ATP = O-phospho-L-threonyl-[protein] + ADP + H(+). CIPK serine-threonine protein kinases interact with CBL proteins. Binding of a CBL protein to the regulatory NAF domain of CIPK protein lead to the activation of the kinase in a calcium-dependent manner. In Arabidopsis thaliana (Mouse-ear cress), this protein is CBL-interacting serine/threonine-protein kinase 17 (CIPK17).